The following is a 232-amino-acid chain: Large ribosomal subunit protein uL1 (232 aa).

Belongs to the universal ribosomal protein uL1 family. Part of the 50S ribosomal subunit.

Binds directly to 23S rRNA. The L1 stalk is quite mobile in the ribosome, and is involved in E site tRNA release. Its function is as follows. Protein L1 is also a translational repressor protein, it controls the translation of the L11 operon by binding to its mRNA. The polypeptide is Large ribosomal subunit protein uL1 (Phocaeicola vulgatus (strain ATCC 8482 / DSM 1447 / JCM 5826 / CCUG 4940 / NBRC 14291 / NCTC 11154) (Bacteroides vulgatus)).